A 1073-amino-acid chain; its full sequence is Probable cellulose synthase A catalytic subunit 2 [UDP-forming] (1073 aa).

At 1–270 the chain is on the cytoplasmic side; that stretch reads MDGAKSGKQC…SSSRINPYRM (270 aa). Positions 13, 16, 32, 35, 40, 43, 55, and 58 each coordinate Zn(2+). The segment at 13–59 adopts an RING-type; degenerate zinc-finger fold; that stretch reads CQICGDGVGTAADGELFTACDVCGFPVCRPCYEYERKDGSQACPQCK. The disordered stretch occupies residues 66 to 98; sequence KGSPPILGDESDDVDADDASDVNYPTSGNQDHK. The span at 74 to 85 shows a compositional bias: acidic residues; that stretch reads DESDDVDADDAS. Residues 271–291 form a helical membrane-spanning segment; the sequence is VIVLRLIVLCIFLHYRITNPV. The Extracellular portion of the chain corresponds to 292 to 293; it reads RN. The chain crosses the membrane as a helical span at residues 294–314; the sequence is AYPLWLLSVICEIWFALSWIL. Over 315–856 the chain is Cytoplasmic; that stretch reads DQFPKWSPIN…INTTIYPLTS (542 aa). 4 residues coordinate UDP-alpha-D-glucose: Ser-353, Lys-359, Glu-360, and Asp-389. The active site involves Asp-389. Positions 443-470 form a coiled coil; the sequence is VKDRRAMKREYEEFKVRVNALVAKAQKV. Residue Lys-530 coordinates UDP-alpha-D-glucose. Mn(2+) is bound by residues Lys-531 and Asp-555. The disordered stretch occupies residues 655-676; sequence GGRKKTKKSKEKSTEKKKSHKH. Asp-773 is an active-site residue. The chain crosses the membrane as a helical span at residues 857 to 877; that stretch reads IPLLLYCILPAICLLTGKFII. Topologically, residues 878–882 are extracellular; that stretch reads PEISN. Residues 883–903 traverse the membrane as a helical segment; it reads FASIWFISLFLSIFATGILEM. Residues 904–918 lie on the Cytoplasmic side of the membrane; the sequence is RWSGVGIDEWWRNEQ. Residues 919 to 939 traverse the membrane as a helical segment; that stretch reads FWVIGGISAHLFAVFQGLLKV. The Extracellular segment spans residues 940–969; sequence LAGIDTSFTVTSKASDEEGDFAELYMFKWT. Residues 970–990 form a helical membrane-spanning segment; it reads TLLIPPTTILIINLVGVVAGI. Residues 991 to 1001 lie on the Cytoplasmic side of the membrane; that stretch reads SYAINSGYQSW. Residues 1002-1022 traverse the membrane as a helical segment; it reads GPLFGKLFFAFWVIVHLYPFL. The Extracellular portion of the chain corresponds to 1023–1031; it reads KGLMGRQNR. Residues 1032 to 1052 form a helical membrane-spanning segment; sequence TPTIVVVWAILLASIFSLLWV. The Cytoplasmic portion of the chain corresponds to 1053 to 1073; the sequence is RIDPFTTRVTGPDTQKCGINC.

This sequence belongs to the glycosyltransferase 2 family. Plant cellulose synthase subfamily. Mn(2+) serves as cofactor. It depends on Zn(2+) as a cofactor.

It localises to the cell membrane. It carries out the reaction [(1-&gt;4)-beta-D-glucosyl](n) + UDP-alpha-D-glucose = [(1-&gt;4)-beta-D-glucosyl](n+1) + UDP + H(+). The protein operates within glycan metabolism; plant cellulose biosynthesis. Probable catalytic subunit of cellulose synthase terminal complexes ('rosettes'), required for beta-1,4-glucan microfibril crystallization, a major mechanism of the cell wall formation. The chain is Probable cellulose synthase A catalytic subunit 2 [UDP-forming] (CESA2) from Oryza sativa subsp. japonica (Rice).